The sequence spans 1147 residues: Multiple epidermal growth factor-like domains protein 10 (1147 aa).

Residues 1 to 25 form the signal peptide; it reads MAISSSSCLGLICSLLCHWVGTASS. The interval 1–857 is necessary for interaction with AP2M1, self-assembly and formation of the irregular, mosaic-like adhesion pattern; that stretch reads MAISSSSCLG…ALPADSYQIG (857 aa). The Extracellular portion of the chain corresponds to 26 to 857; sequence LNLEDPNVCS…ALPADSYQIG (832 aa). The EMI domain maps to 30–107; sequence DPNVCSHWES…FYESRDMCVP (78 aa). 47 cysteine pairs are disulfide-bonded: Cys34–Cys95, Cys60–Cys69, Cys94–Cys105, Cys109–Cys124, Cys126–Cys135, Cys148–Cys160, Cys154–Cys167, Cys169–Cys178, Cys191–Cys203, Cys197–Cys210, Cys212–Cys221, Cys234–Cys246, Cys240–Cys253, Cys255–Cys264, Cys281–Cys289, Cys283–Cys296, Cys298–Cys307, Cys320–Cys332, Cys326–Cys339, Cys341–Cys350, Cys409–Cys421, Cys415–Cys428, Cys430–Cys439, Cys456–Cys464, Cys458–Cys471, Cys473–Cys482, Cys495–Cys507, Cys501–Cys514, Cys516–Cys525, Cys542–Cys550, Cys544–Cys557, Cys559–Cys568, Cys581–Cys593, Cys587–Cys600, Cys602–Cys611, Cys669–Cys681, Cys675–Cys688, Cys690–Cys699, Cys716–Cys724, Cys718–Cys731, Cys733–Cys742, Cys755–Cys767, Cys761–Cys774, Cys776–Cys785, Cys802–Cys810, Cys804–Cys817, and Cys819–Cys828. EGF-like domains follow at residues 101–136, 144–179, 187–222, 230–265, 278–308, 316–351, 405–440, 453–483, 491–526, 539–569, 577–612, 665–700, 713–743, 751–786, and 799–829; these read SRDM…TNCS, WGPH…WRCE, YGND…AFCE, HGPH…TVCG, SQEC…ERCQ, YGVR…ELCE, YGEA…TDCS, SSRC…VDCS, WGFG…AKCE, AERC…VHCD, WGPN…TTCQ, FGKN…SDCS, IHTC…LYCT, YGKD…RHCE, and RQIC…ARCD. Asn134 carries N-linked (GlcNAc...) asparagine glycosylation. N-linked (GlcNAc...) asparagine glycosylation occurs at Asn496. Residues 858–878 traverse the membrane as a helical segment; it reads AIAGIVVLVLVVLFLLALFII. Over 879–1147 the chain is Cytoplasmic; the sequence is YRHKQKRKES…STSSSSSSSE (269 aa). Residues 945–1147 form a necessary for formation of large intracellular vacuoles region; the sequence is RDRMTIAKSK…STSSSSSSSE (203 aa). Tyr1030 bears the Phosphotyrosine mark. The segment at 1093–1147 is disordered; sequence HVTQDPYDLPKNSHIPCHYDLLPVRDSSSSPKREDGGGSNSTSSNSTSSSSSSSE. Over residues 1132–1147 the composition is skewed to low complexity; the sequence is NSTSSNSTSSSSSSSE.

The protein belongs to the MEGF family. As to quaternary structure, homomer. Interacts with GULP1 and ABCA1. Interacts with AP2M1. Does not interact with MEGF11. Binds with high affinity to complement C1q. Interacts (via the cytoplasmic domain) with NOTCH1 (via NICD domain). In terms of processing, ubiquitinated; mono- and polyubiquitinated forms are detected. Phosphorylated on tyrosine residues. Phosphorylation at Tyr-1030 may be important for muscle cell proliferation. Expressed in cerebellum (at protein level). Expressed in kidney, stellate cells of the cerebellum and macrophage cell lines.

It is found in the cell membrane. It localises to the cell projection. The protein localises to the phagocytic cup. Functionally, membrane receptor involved in phagocytosis by macrophages and astrocytes of apoptotic cells. Receptor for C1q, an eat-me signal, that binds phosphatidylserine expressed on the surface of apoptotic cells. Cooperates with ABCA1 within the process of engulfment. Promotes the formation of large intracellular vacuoles and may be responsible for the uptake of amyloid-beta peptides. Necessary for astrocyte-dependent apoptotic neuron clearance in the developing cerebellum. Plays a role in muscle cell proliferation, adhesion and motility. Is also an essential factor in the regulation of myogenesis. Controls the balance between skeletal muscle satellite cells proliferation and differentiation through regulation of the notch signaling pathway. May also function in the mosaic spacing of specific neuron subtypes in the retina through homotypic retinal neuron repulsion. Mosaics provide a mechanism to distribute each cell type evenly across the retina, ensuring that all parts of the visual field have access to a full set of processing elements. This chain is Multiple epidermal growth factor-like domains protein 10, found in Mus musculus (Mouse).